A 674-amino-acid chain; its full sequence is UvrABC system protein C (674 aa).

In terms of domain architecture, GIY-YIG spans 16–95 (TNPGVYRFRD…IKEFKPRFNV (80 aa)). Positions 207-242 (KRFTNKLEKQMAAAVARLDYEQAARIRDDITALRKV) constitute a UVR domain.

It belongs to the UvrC family. Interacts with UvrB in an incision complex.

It localises to the cytoplasm. Functionally, the UvrABC repair system catalyzes the recognition and processing of DNA lesions. UvrC both incises the 5' and 3' sides of the lesion. The N-terminal half is responsible for the 3' incision and the C-terminal half is responsible for the 5' incision. This Pseudarthrobacter chlorophenolicus (strain ATCC 700700 / DSM 12829 / CIP 107037 / JCM 12360 / KCTC 9906 / NCIMB 13794 / A6) (Arthrobacter chlorophenolicus) protein is UvrABC system protein C.